A 660-amino-acid polypeptide reads, in one-letter code: Leucine-rich repeat transmembrane protein FLRT2 (660 aa).

The first 35 residues, 1-35 (MGLQTTKWPGRGAFILKFWLIISLGLYLQVSKLLA), serve as a signal peptide directing secretion. 2 disulfide bridges follow: Cys-36–Cys-42 and Cys-40–Cys-49. An LRRNT domain is found at 36–63 (CPSVCRCDRNFVYCNERSLTSVPLGIPE). The Extracellular segment spans residues 36 to 540 (CPSVCRCDRN…QTTSHSMGSP (505 aa)). 10 LRR repeats span residues 62-87 (PEGVTVLYLHNNQINNAGFPAELHNV), 88-108 (QSVHTVYLYGNQLDEFPMNLP), 109-131 (KNVRVLHLQENNIQTISRAALAQ), 132-157 (LLKLEELHLDDNSISTVGVEDGAFRE), 159-181 (ISLKLLFLSKNHLSSVPVGLPVD), 183-202 (QELRVDENRIAVISDMAFQN), 203-228 (LTSLERLIVDGNLLTNKGIAEGTFSH), 229-251 (LTKLKEFSIVRNSLSHPPPDLPG), 252-274 (THLIRLYLQDNQINHIPLTAFAN), and 275-298 (LRKLERLDISNNQLRMLTQGVFDH). N-linked (GlcNAc...) asparagine glycosylation occurs at Asn-202. An LRRCT domain is found at 310–362 (NPWFCDCSIKWVTEWLKYIPSSLNVRGFMCQGPEQVRGMAVRELNMNLLSCPT). Disulfide bonds link Cys-314/Cys-339 and Cys-316/Cys-360. Over residues 371–396 (TPAPSTVSPTTQSPTLSVPSPSRGSV) the composition is skewed to low complexity. The disordered stretch occupies residues 371–413 (TPAPSTVSPTTQSPTLSVPSPSRGSVPPAPTPSKLPTIPDWDG). One can recognise a Fibronectin type-III domain in the interval 419–517 (PPISERIQLS…ICSEATTHAS (99 aa)). The helical transmembrane segment at 541–561 (FLLAGLIGGAVIFVLVVLLSV) threads the bilayer. Residues 562-660 (FCWHMHKKGR…SVPDLEHCHT (99 aa)) are Cytoplasmic-facing.

As to quaternary structure, self-associates (via leucine-rich repeats), giving rise to homooligomers. Interacts with FGFR1. Interacts with FGFR2. Interacts (via extracellular domain) with ADGRL1/LPHN1. Interacts (via extracellular domain) with ADGRL3 (via olfactomedin-like domain). Interacts (via extracellular domain) with UNC5D (via the first Ig-like domain). Can also interact (via extracellular domain) with UNC5B, but with much lower affinity. Interacts (via extracellular domain) with FN1. Post-translationally, N-glycosylated. In terms of processing, proteolytic cleavage in the juxtamembrane region gives rise to a soluble ectodomain. Cleavage is probably effected by a metalloprotease. In terms of tissue distribution, detected in adult brain (at protein level).

Its subcellular location is the cell membrane. The protein localises to the endoplasmic reticulum membrane. The protein resides in the cell junction. It is found in the focal adhesion. It localises to the secreted. Its subcellular location is the extracellular space. The protein localises to the extracellular matrix. The protein resides in the synapse. It is found in the synaptosome. It localises to the microsome membrane. In terms of biological role, functions in cell-cell adhesion, cell migration and axon guidance. Mediates cell-cell adhesion via its interactions with ADGRL3 and probably also other latrophilins that are expressed at the surface of adjacent cells. May play a role in the migration of cortical neurons during brain development via its interaction with UNC5D. Mediates axon growth cone collapse and plays a repulsive role in neuron guidance via its interaction with UNC5D, and possibly also other UNC-5 family members. Plays a role in fibroblast growth factor-mediated signaling cascades. Required for normal organization of the cardiac basement membrane during embryogenesis, and for normal embryonic epicardium and heart morphogenesis. This Mus musculus (Mouse) protein is Leucine-rich repeat transmembrane protein FLRT2.